Reading from the N-terminus, the 137-residue chain is Small ribosomal subunit protein uS12 (137 aa).

Asp-102 bears the 3-methylthioaspartic acid mark.

The protein belongs to the universal ribosomal protein uS12 family. Part of the 30S ribosomal subunit. Contacts proteins S8 and S17. May interact with IF1 in the 30S initiation complex.

Its function is as follows. With S4 and S5 plays an important role in translational accuracy. Functionally, interacts with and stabilizes bases of the 16S rRNA that are involved in tRNA selection in the A site and with the mRNA backbone. Located at the interface of the 30S and 50S subunits, it traverses the body of the 30S subunit contacting proteins on the other side and probably holding the rRNA structure together. The combined cluster of proteins S8, S12 and S17 appears to hold together the shoulder and platform of the 30S subunit. The polypeptide is Small ribosomal subunit protein uS12 (Phytoplasma mali (strain AT)).